A 696-amino-acid polypeptide reads, in one-letter code: MARDYDLKDYRNIGIMAHIDAGKTTTTERILYHTGKIHKIGETHDGVSQMDWMEQEKERGITITSAATTAYWKNKRINIIDTPGHVDFTVEVERSLRVLDGAVAVLDAQSGVEPQTETVWRQATNYKVPRIVYVNKMDKAGADFEAAVASVKSRLGGNAVAIQWPIGSESNFNGIIDLVTMTATTYNGESAEEEFPMEIPTDLLDVAKAKRQELLEAAANFDEEVMMMVLEGADVDIDTFKNTIRKATLTSEFFPVVCGTSFKNKGVKKMIDAVVDYLPSPLDIPPIKAYLNDQETDVVATDDGEFAALAFKVMTDPFVGSLTFFRVYRGVLEKGSYVYNSTKEQKERIGRILQMHANNRVEIDECRAGDIAAAVGLKFTTTGDTLVGEKSPKVVLEKMVFPEPVISQALEPESKAANEKLSLGLQKLSAEDPTFRTYTDEETGQTIISGMGELHLDIIVDRLKREFGVKVKVGAPQVSYRETITKSAEVEGKHIKQSGGKGQYGHVWLKFEPNHDQGFEFIDKIVGGKIPKEYIKPIQKGLEEKMAVGILAGYPMIDVKATLFDGSYHDVDSSELAYKIAASKALTKAKDLIGTVLLEPIMDVSVVVPSDHMGDVIGDLSRRRGLISDQEQRNDGAVIVRAKVPLSEMFGYSTELRSMTSGRGTYQMQFDHYEKCPKNISDEIIKKRNIQNKDEE.

In terms of domain architecture, tr-type G spans 8–282 (KDYRNIGIMA…AVVDYLPSPL (275 aa)). GTP-binding positions include 17-24 (AHIDAGKT), 81-85 (DTPGH), and 135-138 (NKMD).

It belongs to the TRAFAC class translation factor GTPase superfamily. Classic translation factor GTPase family. EF-G/EF-2 subfamily.

It localises to the cytoplasm. Catalyzes the GTP-dependent ribosomal translocation step during translation elongation. During this step, the ribosome changes from the pre-translocational (PRE) to the post-translocational (POST) state as the newly formed A-site-bound peptidyl-tRNA and P-site-bound deacylated tRNA move to the P and E sites, respectively. Catalyzes the coordinated movement of the two tRNA molecules, the mRNA and conformational changes in the ribosome. In Mycoplasmopsis synoviae (strain 53) (Mycoplasma synoviae), this protein is Elongation factor G.